We begin with the raw amino-acid sequence, 408 residues long: Sex comb on midleg-like protein 4 (408 aa).

Phosphoserine occurs at positions 55 and 65. A disordered region spans residues 274 to 338 (AGGPATTTSG…TRRPSSRNPS (65 aa)). Residues 278–287 (ATTTSGSRTN) show a composition bias toward polar residues. Low complexity predominate over residues 288–306 (PVPSGGSSSPGLRLPASSP). The SAM domain occupies 340–406 (WTVEDVVRFV…CYHIDKLKQA (67 aa)).

Belongs to the SCM family.

It is found in the nucleus. Putative Polycomb group (PcG) protein. PcG proteins act by forming multiprotein complexes, which are required to maintain the transcriptionally repressive state of homeotic genes throughout development. This is Sex comb on midleg-like protein 4 (Scml4) from Mus musculus (Mouse).